The primary structure comprises 162 residues: NADH-quinone oxidoreductase subunit I (162 aa).

4Fe-4S ferredoxin-type domains are found at residues 53–83 (LRRY…IEAE) and 93–122 (TRYD…EGPN). 8 residues coordinate [4Fe-4S] cluster: Cys63, Cys66, Cys69, Cys73, Cys102, Cys105, Cys108, and Cys112.

The protein belongs to the complex I 23 kDa subunit family. NDH-1 is composed of 14 different subunits. Subunits NuoA, H, J, K, L, M, N constitute the membrane sector of the complex. It depends on [4Fe-4S] cluster as a cofactor.

Its subcellular location is the cell inner membrane. The catalysed reaction is a quinone + NADH + 5 H(+)(in) = a quinol + NAD(+) + 4 H(+)(out). In terms of biological role, NDH-1 shuttles electrons from NADH, via FMN and iron-sulfur (Fe-S) centers, to quinones in the respiratory chain. The immediate electron acceptor for the enzyme in this species is believed to be ubiquinone. Couples the redox reaction to proton translocation (for every two electrons transferred, four hydrogen ions are translocated across the cytoplasmic membrane), and thus conserves the redox energy in a proton gradient. The polypeptide is NADH-quinone oxidoreductase subunit I (Sphingopyxis alaskensis (strain DSM 13593 / LMG 18877 / RB2256) (Sphingomonas alaskensis)).